The primary structure comprises 336 residues: Ketoreductase adrE (336 aa).

Tyr171 serves as a coordination point for NADP(+).

Belongs to the NAD(P)-dependent epimerase/dehydratase family. Dihydroflavonol-4-reductase subfamily.

Its pathway is secondary metabolite biosynthesis; terpenoid biosynthesis. Ketoreductase; part of the gene cluster that mediates the biosynthesis of andrastins, meroterpenoid compounds that exhibit inhibitory activity against ras farnesyltransferase, suggesting that they could be promising leads for antitumor agents. The first step of the pathway is the synthesis of 3,5-dimethylorsellinic acid (DMOA) by the polyketide synthase adrD via condensation of one acetyl-CoA starter unit with 3 malonyl-CoA units and 2 methylations. DMAO is then converted to farnesyl-DMAO by the prenyltransferase adrG. The methyltransferase adrK catalyzes the methylation of the carboxyl group of farnesyl-DMAO to farnesyl-DMAO methyl ester which is further converted to epoxyfarnesyl-DMAO methyl ester by the FAD-dependent monooxygenase adrH. The terpene cyclase adrI then catalyzes the carbon skeletal rearrangement to generate the andrastin E, the first compound in the pathway having the andrastin scaffold, with the tetracyclic ring system. The post-cyclization tailoring enzymes adrF, adrE, adrJ, and adrA, are involved in the conversion of andrastin E into andrastin A. The short chain dehydrogenase adrF is responsible for the oxidation of the C-3 a hydroxyl group of andrastin E to yield the corresponding ketone, andrastin D. The ketoreductase adrE stereoselectively reduces the carbonyl moiety to reverse the stereochemistry of the C-3 position to yield andrastin F. The acetyltransferase adrJ is the acetyltransferase that attaches the acetyl group to the C-3 hydroxyl group of andrastin F to yield andrastin C. Finally, the cytochrome P450 monooxygenase adrA catalyzes two sequential oxidation reactions of the C-23 methyl group, to generate the corresponding alcohol andrastin B, and aldehyde andrastin A. The protein is Ketoreductase adrE of Penicillium roqueforti.